Here is a 302-residue protein sequence, read N- to C-terminus: Beta-1,2-mannobiose phosphorylase (302 aa).

It belongs to the glycosyl hydrolase 130 family. In terms of assembly, monomer.

It catalyses the reaction beta-D-mannopyranosyl-(1-&gt;2)-D-mannopyranose + phosphate = alpha-D-mannose 1-phosphate + D-mannose. It participates in nucleotide-sugar biosynthesis; GDP-alpha-D-mannose biosynthesis. Probably involved in a salvage pathway for GDP-D-mannose biosynthesis. Catalyzes the reversible phosphorolysis of 1,2-beta-oligomannan. In phosphorolytic reactions, prefers beta-1,2-mannobiose (beta-1,2-Man2) as substrate. Produces alpha-D-mannose 1-phosphate, which is the precursor of GDP-D-mannose. The sequence is that of Beta-1,2-mannobiose phosphorylase from Thermoanaerobacter sp. (strain X514).